The chain runs to 516 residues: 3-phosphoshikimate 1-carboxyvinyltransferase, chloroplastic (516 aa).

Residues methionine 1 to glutamine 72 constitute a chloroplast transit peptide. Residues lysine 95, serine 96, and arginine 100 each contribute to the 3-phosphoshikimate site. A phosphoenolpyruvate-binding site is contributed by lysine 95. Glycine 173 and arginine 203 together coordinate phosphoenolpyruvate. 3-phosphoshikimate-binding residues include serine 250, serine 251, glutamine 252, serine 278, aspartate 403, and lysine 430. Glutamine 252 contacts phosphoenolpyruvate. Residue aspartate 403 is the Proton acceptor of the active site. Residues arginine 434, arginine 476, and lysine 501 each contribute to the phosphoenolpyruvate site.

This sequence belongs to the EPSP synthase family. Mostly expressed in flower petals, and, to a lower extent, in roots, stems and anthers, but barely in leaves.

The protein localises to the plastid. It is found in the chloroplast. The catalysed reaction is 3-phosphoshikimate + phosphoenolpyruvate = 5-O-(1-carboxyvinyl)-3-phosphoshikimate + phosphate. It participates in metabolic intermediate biosynthesis; chorismate biosynthesis; chorismate from D-erythrose 4-phosphate and phosphoenolpyruvate: step 6/7. Its activity is regulated as follows. Competitively inhibited by glyphosate. Catalyzes the transfer of the enolpyruvyl moiety of phosphoenolpyruvate (PEP) to the 5-hydroxyl of shikimate-3-phosphate (S3P) to produce enolpyruvyl shikimate-3-phosphate and inorganic phosphate. Involved in the accumulation of volatile benzoides in flowers, scent attracting pollinators (e.g. the night-active hawkmoth pollinator Manduca sexta). The sequence is that of 3-phosphoshikimate 1-carboxyvinyltransferase, chloroplastic from Petunia hybrida (Petunia).